Consider the following 280-residue polypeptide: Bis(5'-nucleosyl)-tetraphosphatase, symmetrical (280 aa).

This sequence belongs to the Ap4A hydrolase family.

The enzyme catalyses P(1),P(4)-bis(5'-adenosyl) tetraphosphate + H2O = 2 ADP + 2 H(+). Functionally, hydrolyzes diadenosine 5',5'''-P1,P4-tetraphosphate to yield ADP. This chain is Bis(5'-nucleosyl)-tetraphosphatase, symmetrical, found in Escherichia coli O17:K52:H18 (strain UMN026 / ExPEC).